We begin with the raw amino-acid sequence, 428 residues long: D-amino acid dehydrogenase (428 aa).

3–17 (VVILGSGVVGVASAY) is a binding site for FAD.

This sequence belongs to the DadA oxidoreductase family. The cofactor is FAD.

It carries out the reaction a D-alpha-amino acid + A + H2O = a 2-oxocarboxylate + AH2 + NH4(+). The protein operates within amino-acid degradation; D-alanine degradation; NH(3) and pyruvate from D-alanine: step 1/1. Oxidative deamination of D-amino acids. This Burkholderia lata (strain ATCC 17760 / DSM 23089 / LMG 22485 / NCIMB 9086 / R18194 / 383) protein is D-amino acid dehydrogenase.